We begin with the raw amino-acid sequence, 115 residues long: MSNQGKDSFKAYSYFCPCGQLFLTIHVSLTRLPQRQLDKRHVVDEKLNHIAHFSTGNKYYITRSDGGYEQRIQLLCRRCTLECAYALEAAPGYIYVDPTLVNEKPVTVSVSNLKE.

Belongs to the STEEP1 family.

May stimulate membrane curvature formation and subsequent endoplasmic reticulum exit site (ERES) establishment. The protein is ER exit protein of Schizosaccharomyces pombe (strain 972 / ATCC 24843) (Fission yeast).